Consider the following 381-residue polypeptide: Arf-GAP with dual PH domain-containing protein 2 (381 aa).

Residues 9-131 (KRLLELLRAP…FMADGETISL (123 aa)) form the Arf-GAP domain. The C4-type zinc finger occupies 25–48 (CADCGAADPDWASYKLGIFICLNC). PH domains are found at residues 132 to 233 (PGNR…AARL) and 255 to 361 (NYLK…GVLS).

Highly expressed in placenta, spleen, kidney, skeletal muscle and adrenal gland. Weakly expressed in thyroid, liver, heart, lung, small intestine, peripheral blood leukocytes. Not detected in spinal cord, brain, stomach, trachea, colon, lymph node and bone marrow.

The protein localises to the cytoplasm. The protein resides in the cell membrane. In terms of biological role, GTPase-activating protein for the ADP ribosylation factor family (Potential). Binds phosphatidylinositol 3,4,5-trisphosphate (PtdInsP3) and inositol 1,3,4,5-tetrakisphosphate (InsP4). Possesses a stoichiometry of two binding sites for InsP4 with identical affinity. This is Arf-GAP with dual PH domain-containing protein 2 (ADAP2) from Homo sapiens (Human).